A 161-amino-acid polypeptide reads, in one-letter code: Cyclic pyranopterin monophosphate synthase (161 aa).

Residues 75–77 and 113–114 each bind substrate; these read LCH and ME. Residue Asp-128 is part of the active site.

The protein belongs to the MoaC family. Homohexamer; trimer of dimers.

The catalysed reaction is (8S)-3',8-cyclo-7,8-dihydroguanosine 5'-triphosphate = cyclic pyranopterin phosphate + diphosphate. It participates in cofactor biosynthesis; molybdopterin biosynthesis. Its function is as follows. Catalyzes the conversion of (8S)-3',8-cyclo-7,8-dihydroguanosine 5'-triphosphate to cyclic pyranopterin monophosphate (cPMP). In Citrobacter koseri (strain ATCC BAA-895 / CDC 4225-83 / SGSC4696), this protein is Cyclic pyranopterin monophosphate synthase.